Consider the following 357-residue polypeptide: Alanine racemase (357 aa).

The active-site Proton acceptor; specific for D-alanine is the Lys-34. Lys-34 is modified (N6-(pyridoxal phosphate)lysine). Arg-130 is a binding site for substrate. Tyr-253 functions as the Proton acceptor; specific for L-alanine in the catalytic mechanism. A substrate-binding site is contributed by Met-301.

This sequence belongs to the alanine racemase family. Pyridoxal 5'-phosphate is required as a cofactor.

It carries out the reaction L-alanine = D-alanine. Its pathway is amino-acid biosynthesis; D-alanine biosynthesis; D-alanine from L-alanine: step 1/1. Catalyzes the interconversion of L-alanine and D-alanine. May also act on other amino acids. The chain is Alanine racemase (alr) from Mannheimia succiniciproducens (strain KCTC 0769BP / MBEL55E).